The primary structure comprises 1074 residues: MLSVENGLDPRAAIQVIKKKLVGSVKALQKQHVSLDTVVTSEDGDANTMCSALEAVFIHGLHAKHIRAEAGGKRKKHTHQKALPQPVFWPLLKAITHRHIVSDLEHLVFINTDVGRCRAWLRLALNDGLMECYLKLLLQEPARLCEYYQPTALLRDAEEAEFLLSFLQGLTSLSFELSYKSAILNEWTLTPLSLSGLCPLSELDPLTTSGAELQRKESLDSISHSSGSEDIEVQHSGHKIRRNRKLTASSLSLDTASSSQLSCSLNSDSCLLQENGPKSPDHSEEPMSYDSDLGMANTDDPDRSLQEVLSEFSKAQVNSAPSSGPNQEPDTPMFQTPLSLHSLATSTHLHFEGSEELFPAHKSSGTSSGGHKHQLLPQETPDEKQLGTAQAGPAQSTSDQQPSSPVGGAAGQGSGPWKALEYGRVGPKLVVSSPTSPKGKSWISEDDFCRPPQEPALKSAAGLCTSPVQDTPESRAALHGPFSQGPRKSCSLGALDKACVPSQACGNAQPAPAPAPAPAPAPAPAPGVTQDHKNFCVVHRRQMGLSNPFRGLMKLGTVARRGAMGIWKEFFCELSPLEFRLYLSDEERTCVESCSLLRCEAVGPAHSDGRFELVFSGKKLALRASSQDEAEDWLDRVREALQKVRPQQEDEWVNIQYPDQAEDAPEAPPDSLPPYSTLLPEPAGAQGMQLDWTSAQVPEPDAIKESLLYLYADRTWVPYIFSLSLESLKCFRVRNNEKMLSDSHGVETIRDILPDTSLGGPAFFKIITAKAVLKLQAKNTEEATHWRDLVRKVLASYLESAEEAVTLGGSLDEKCQEVLKFATRENGFLLQYLVAIPTEKGLDSQGCFCAGCSRQIGFSFVRPKLCAFSGLYYCDFCHQDDASVIPARIIHNWDLTKRPVCRQALKFLAQIRAQPLINLQLVNASLYEHVERMHLIGRSREQLKLLGDYLGLCRSGALKELCKRLSHRNYLLESPHRFSVADLQQIAEGVYEGFLKALIEFASQHVYHCDLCTQRGFICQICHHQDIIFPFEFDTTVRCAECRTVFHQSCQAVVRKGCPRCARRRKYQEQNVVS.

The 143-residue stretch at 40-182 folds into the RUN domain; sequence TSEDGDANTM…LSFELSYKSA (143 aa). Disordered regions lie at residues 214–244, 272–336, and 382–454; these read QRKE…RRNR, LQEN…MFQT, and DEKQ…PPQE. S218 is modified (phosphoserine). Composition is skewed to polar residues over residues 313–329 and 393–404; these read SKAQ…NQEP and PAQSTSDQQPSS. Phosphoserine is present on residues S433, S436, and S491. The disordered stretch occupies residues 506–526; the sequence is GNAQPAPAPAPAPAPAPAPAP. Residues 511 to 525 show a composition bias toward pro residues; the sequence is APAPAPAPAPAPAPA. The PH 1 domain maps to 551–642; the sequence is GLMKLGTVAR…WLDRVREALQ (92 aa). The short motif at 649–655 is the LIR element; sequence EDEWVNI. Residues 661–680 form a disordered region; sequence AEDAPEAPPDSLPPYSTLLP. The interval 672 to 1074 is interaction with RAB7A; that stretch reads LPPYSTLLPE…RKYQEQNVVS (403 aa). Residues 701–795 enclose the PH 2 domain; sequence DAIKESLLYL…WRDLVRKVLA (95 aa). A Phorbol-ester/DAG-type zinc finger spans residues 1004-1058; that stretch reads QHVYHCDLCTQRGFICQICHHQDIIFPFEFDTTVRCAECRTVFHQSCQAVVRKGC.

In terms of assembly, interacts (via N- and C-terminus) with RAB7A (GTP-bound form). Simultaneously interacts with RAB7A and ARL8B; bringing about clustering and fusion of late endosomes and lysosomes. Interacts (via RUN domain) with ARL8B (GTP-bound form); the interaction is required for PLEKHM1 localization to lysosomes and for ARL8B function in delivery and degradation of endocytic and autophagic cargo in lysosomes. PLEKHM1 and PLEKHM2 compete for interaction with ARL8B. Interacts with ARL8A; the interaction is weaker than with ARL8B. Interacts with VPS41, VPS11, VPS18, VPS33A and VPS39; indicative for an association with the HOPS complex; the interactions with, at least, VPS41, VPS11, VPS18 and VPS33A require ARL8B. Interacts with GABARAP, GABARAPL, GABARAPL2, MAP1LC3A, MAP1LC3B and MAP1LC3C. Interacts with PAFAH1B. Interacts (via N- and C-terminus) with NDEL1. Interacts (via C-terminus) with MAP3K7. Interacts (via N- and C-terminus) with FAM98A. Interacts (via C-terminus) with DEF8; this interaction is weak but increased in a RAB7A-dependent manner. May interact with sialyl-lex-positive protein.

It is found in the autolysosome membrane. The protein resides in the endosome membrane. It localises to the late endosome membrane. The protein localises to the lysosome membrane. Functionally, acts as a multivalent adapter protein that regulates Rab7-dependent and HOPS complex-dependent fusion events in the endolysosomal system and couples autophagic and the endocytic trafficking pathways. Acts as a dual effector of RAB7A and ARL8B that simultaneously binds these GTPases, bringing about clustering and fusion of late endosomes and lysosomes. Required for late stages of endolysosomal maturation, facilitating both endocytosis-mediated degradation of growth factor receptors and autophagosome clearance. Interaction with Arl8b is a crucial factor in the terminal maturation of autophagosomes and to mediate autophagosome-lysosome fusion. Positively regulates lysosome peripheral distribution and ruffled border formation in osteoclasts. May be involved in negative regulation of endocytic transport from early endosome to late endosome/lysosome implicating its association with Rab7. May have a role in sialyl-lex-mediated transduction of apoptotic signals. Involved in bone resorption. The chain is Pleckstrin homology domain-containing family M member 1 from Mus musculus (Mouse).